We begin with the raw amino-acid sequence, 144 residues long: UPF0178 protein Exig_1155 (144 aa).

Residues I110–D144 form a disordered region. Residues A113 to T124 are compositionally biased toward basic residues.

The protein belongs to the UPF0178 family.

This Exiguobacterium sibiricum (strain DSM 17290 / CCUG 55495 / CIP 109462 / JCM 13490 / 255-15) protein is UPF0178 protein Exig_1155.